The following is a 276-amino-acid chain: NAD-capped RNA hydrolase NudC (276 aa).

Arg82 is a binding site for substrate. Residues Cys112 and Cys115 each contribute to the Zn(2+) site. Glu125 is a binding site for substrate. Residues Cys130 and Cys133 each coordinate Zn(2+). Residue Tyr138 participates in substrate binding. The Nudix hydrolase domain occupies 139-262; the sequence is PRISPSMIVL…SIARYLIDLY (124 aa). Residues Ala172, Glu188, and Glu192 each contribute to the a divalent metal cation site. Residues 173–194 carry the Nudix box motif; sequence GFAEPGESAEDCLVREVREEVA. 206–213 is a substrate binding site; that stretch reads QCWPFPHS. Glu233 is an a divalent metal cation binding site. Substrate is bound at residue Ala255.

The protein belongs to the Nudix hydrolase family. NudC subfamily. Homodimer. Requires Mg(2+) as cofactor. Mn(2+) serves as cofactor. The cofactor is Zn(2+).

The enzyme catalyses a 5'-end NAD(+)-phospho-ribonucleoside in mRNA + H2O = a 5'-end phospho-adenosine-phospho-ribonucleoside in mRNA + beta-nicotinamide D-ribonucleotide + 2 H(+). It carries out the reaction NAD(+) + H2O = beta-nicotinamide D-ribonucleotide + AMP + 2 H(+). The catalysed reaction is NADH + H2O = reduced beta-nicotinamide D-ribonucleotide + AMP + 2 H(+). In terms of biological role, mRNA decapping enzyme that specifically removes the nicotinamide adenine dinucleotide (NAD) cap from a subset of mRNAs by hydrolyzing the diphosphate linkage to produce nicotinamide mononucleotide (NMN) and 5' monophosphate mRNA. The NAD-cap is present at the 5'-end of some mRNAs and stabilizes RNA against 5'-processing. Has preference for mRNAs with a 5'-end purine. Catalyzes the hydrolysis of a broad range of dinucleotide pyrophosphates. The sequence is that of NAD-capped RNA hydrolase NudC from Pseudomonas putida (strain GB-1).